A 292-amino-acid chain; its full sequence is RWD domain-containing protein 2A (292 aa).

Positions 14–134 constitute an RWD domain; sequence LEMEMLFSMF…QWLQDNSASY (121 aa).

This is RWD domain-containing protein 2A (RWDD2A) from Macaca fascicularis (Crab-eating macaque).